A 416-amino-acid chain; its full sequence is Keratin, type I cuticular Ha1 (416 aa).

The interval 1 to 56 (MPYNFCLPSLSCRTSCSSRPCVPPSCHSCTLPGACNIPANVSNCNWFCEGSFNGSE) is head. The IF rod domain occupies 56–367 (EKETMQFLND…SLLESEDCNL (312 aa)). Residues 57-91 (KETMQFLNDRLASYLEKVRQLERDNAELENLIRER) form a coil 1A region. Residues 92–102 (SQQQEPLLCPS) are linker 1. The interval 103 to 203 (YQSYFKTIEE…HEQEVNTLRC (101 aa)) is coil 1B. Residues 204–219 (QLGDRLNVEVDAAPTV) form a linker 12 region. The interval 220–363 (DLNRVLNETR…NTYRSLLESE (144 aa)) is coil 2. The segment at 364–416 (DCNLPSNPCATTNACSKPIGPCLSNPCTSCVPPAPCTPCAPRPRCGPCNSFVR) is tail.

It belongs to the intermediate filament family. As to expression, present in scalp but not in hairless skin. Abundantly expressed in the differentiating cortex of growing (anagen) hair. Expression is restricted to the keratinocytes of the hair cortex and is absent from inner root sheath and medulla.

In Homo sapiens (Human), this protein is Keratin, type I cuticular Ha1 (KRT31).